The sequence spans 410 residues: Cell division protein FtsZ (410 aa).

GTP contacts are provided by residues 22–26 (GGGGN), 109–111 (GTG), glutamate 140, arginine 144, and aspartate 188. The disordered stretch occupies residues 318-410 (ESKKDRKPHR…STPPFFRRKR (93 aa)). Residues 330 to 344 (RQAVQPMQQTTQSVE) show a composition bias toward polar residues. Positions 360–398 (WDIRREQNTRPKVDESSLEQVDKKEFDTFHREEPNHNDD) are enriched in basic and acidic residues.

Belongs to the FtsZ family. In terms of assembly, homodimer. Polymerizes to form a dynamic ring structure in a strictly GTP-dependent manner. Interacts directly with several other division proteins.

The protein resides in the cytoplasm. Its function is as follows. Essential cell division protein that forms a contractile ring structure (Z ring) at the future cell division site. The regulation of the ring assembly controls the timing and the location of cell division. One of the functions of the FtsZ ring is to recruit other cell division proteins to the septum to produce a new cell wall between the dividing cells. Binds GTP and shows GTPase activity. The sequence is that of Cell division protein FtsZ from Enterococcus faecalis (strain ATCC 700802 / V583).